Consider the following 271-residue polypeptide: Dirigent protein 17 (271 aa).

Residues Met1–Gln12 are compositionally biased toward polar residues. The segment at Met1–Pro22 is disordered. Asn255 carries N-linked (GlcNAc...) asparagine glycosylation.

It belongs to the plant dirigent protein family. In terms of assembly, homodimer.

Its subcellular location is the secreted. It is found in the extracellular space. The protein localises to the apoplast. Functionally, dirigent proteins impart stereoselectivity on the phenoxy radical-coupling reaction, yielding optically active lignans from two molecules of coniferyl alcohol in the biosynthesis of lignans, flavonolignans, and alkaloids and thus plays a central role in plant secondary metabolism. This chain is Dirigent protein 17 (DIR17), found in Arabidopsis thaliana (Mouse-ear cress).